The sequence spans 491 residues: Large ribosomal subunit protein mL101 (rPPR4) (491 aa).

8 PPR repeats span residues 122 to 156, 157 to 191, 192 to 226, 228 to 262, 263 to 293, 298 to 328, 333 to 367, and 368 to 402; these read TELT…NITP, SSMS…NVMP, DSYT…GRVA, DWTT…NTQR, DFTA…LRLA, SNVA…WQAN, DIRI…GGKL, and NAKT…GKGD.

This sequence belongs to the PPR family. P subfamily. Component of the mitochondrial ribosome large subunit.

Its subcellular location is the mitochondrion. This Arabidopsis thaliana (Mouse-ear cress) protein is Large ribosomal subunit protein mL101 (rPPR4).